The primary structure comprises 208 residues: MTLIPIVVEQTSRGERAYDIYSRLVKERIIFVTGPIEDNMASVIVAQLLFLESENPDKDICMYINSPGGVVTAGLSIYDTMQYINPDVSTLCIGQAASMGSLLLAAGTKGKRYSLPHSRIMIHQPSGGYHGQATDIEIHANEILRVKKKLNQIYEKHTGNSLKKIEGMMERDKFMDPEEARKIGLIDRVIAERTDIEIENIKVKQKVG.

Catalysis depends on S98, which acts as the Nucleophile. H123 is a catalytic residue.

It belongs to the peptidase S14 family. Fourteen ClpP subunits assemble into 2 heptameric rings which stack back to back to give a disk-like structure with a central cavity, resembling the structure of eukaryotic proteasomes.

It localises to the cytoplasm. The catalysed reaction is Hydrolysis of proteins to small peptides in the presence of ATP and magnesium. alpha-casein is the usual test substrate. In the absence of ATP, only oligopeptides shorter than five residues are hydrolyzed (such as succinyl-Leu-Tyr-|-NHMec, and Leu-Tyr-Leu-|-Tyr-Trp, in which cleavage of the -Tyr-|-Leu- and -Tyr-|-Trp bonds also occurs).. Cleaves peptides in various proteins in a process that requires ATP hydrolysis. Has a chymotrypsin-like activity. Plays a major role in the degradation of misfolded proteins. The sequence is that of ATP-dependent Clp protease proteolytic subunit from Wolbachia sp. subsp. Drosophila simulans (strain wRi).